A 307-amino-acid chain; its full sequence is Delta-9 acyl-lipid desaturase 2 (307 aa).

Over residues 1–17 (MSVTSTVEENHQKNPST) the composition is skewed to polar residues. The tract at residues 1 to 21 (MSVTSTVEENHQKNPSTPAAV) is disordered. A helical transmembrane segment spans residues 53–73 (LALLAPFYFTWSALWVTFLFY). Residues His-85 and His-90 each coordinate Fe cation. The Histidine box-1 signature appears at 85-90 (HRNLAH). Residues 99–119 (LEYLLAYCALLAIQGDPIDWV) form a helical membrane-spanning segment. The Fe cation site is built by His-122, His-125, and His-126. The Histidine box-2 motif lies at 122–126 (HRYHH). A run of 2 helical transmembrane segments spans residues 182 to 202 (VLFH…MSFV) and 204 to 224 (WGMG…NSLC). Residues His-225, His-254, His-257, and His-258 each contribute to the Fe cation site. Residues 254–258 (HNNHH) carry the Histidine box-3 motif.

This sequence belongs to the fatty acid desaturase type 1 family. It depends on Fe cation as a cofactor. As to expression, strongly expressed in flowers, roots, leaves, seedpods, and inflorescence meristems.

Its subcellular location is the endoplasmic reticulum membrane. It carries out the reaction a 1-hexacosanoyl-2-acyl-phosphoglycerolipid + 2 Fe(II)-[cytochrome b5] + O2 + 2 H(+) = a 1-[(17Z)-hexacos-17-enoyl]-2-acyl-phosphoglycerolipid + 2 Fe(III)-[cytochrome b5] + 2 H2O. The catalysed reaction is a 1-tetracosanoyl-2-acyl-phosphoglycerolipid + 2 Fe(II)-[cytochrome b5] + O2 + 2 H(+) = a 1-[(15Z)-tetracos-15-enoyl]-2-acyl-phosphoglycerolipid + 2 Fe(III)-[cytochrome b5] + 2 H2O. It participates in lipid metabolism; polyunsaturated fatty acid biosynthesis. Its function is as follows. Involved in delta-9 desaturation of fatty acids. Plays a role in the production of very-long-chain monounsaturated fatty acids (VLCMUFAs) in seed lipids and in membrane phospholipids and sphingolipids. Acts as C-16:0 desaturase for monogalactosyl diacylglycerol (MGDG) and phosphatidylglycerol (PG). Is an essential component for cold adaptation. Is essential to adjust the acyl composition of organelle membrane lipid composition in response to cold stress. The sequence is that of Delta-9 acyl-lipid desaturase 2 from Arabidopsis thaliana (Mouse-ear cress).